Here is a 375-residue protein sequence, read N- to C-terminus: 2-oxoglutarate synthase subunit KorA (375 aa).

Heterotetramer of the KorA, KorB, KorC and KorD subunits.

It carries out the reaction 2 oxidized [2Fe-2S]-[ferredoxin] + 2-oxoglutarate + CoA = succinyl-CoA + 2 reduced [2Fe-2S]-[ferredoxin] + CO2 + H(+). This is 2-oxoglutarate synthase subunit KorA (korA) from Methanothermobacter marburgensis (strain ATCC BAA-927 / DSM 2133 / JCM 14651 / NBRC 100331 / OCM 82 / Marburg) (Methanobacterium thermoautotrophicum).